Consider the following 501-residue polypeptide: Glycerol kinase (501 aa).

An ADP-binding site is contributed by Thr-12. ATP contacts are provided by Thr-12, Thr-13, and Ser-14. Thr-12 is a binding site for sn-glycerol 3-phosphate. Position 16 (Arg-16) interacts with ADP. Residues Arg-82, Glu-83, Tyr-135, and Asp-244 each coordinate sn-glycerol 3-phosphate. Glycerol is bound by residues Arg-82, Glu-83, Tyr-135, Asp-244, and Gln-245. ADP is bound by residues Thr-266, Gly-309, Gly-409, and Asn-413. ATP-binding residues include Thr-266, Gly-309, and Gly-409.

It belongs to the FGGY kinase family.

It carries out the reaction glycerol + ATP = sn-glycerol 3-phosphate + ADP + H(+). Its pathway is polyol metabolism; glycerol degradation via glycerol kinase pathway; sn-glycerol 3-phosphate from glycerol: step 1/1. With respect to regulation, inhibited by fructose 1,6-bisphosphate (FBP). In terms of biological role, key enzyme in the regulation of glycerol uptake and metabolism. Catalyzes the phosphorylation of glycerol to yield sn-glycerol 3-phosphate. The chain is Glycerol kinase from Coxiella burnetii (strain RSA 331 / Henzerling II).